Consider the following 314-residue polypeptide: Dihydroorotate dehydrogenase (fumarate) (314 aa).

Residues K46, 70–74 (NSMGL), and N130 contribute to the substrate site. FMN is bound at residue 46-47 (KS). N130 serves as a coordination point for FMN. Residues S132 and C133 each act as nucleophile in the active site. Positions 167 and 195 each coordinate FMN. A substrate-binding site is contributed by 196 to 197 (NS). Residues G224, 252–253 (GG), and 274–275 (GT) contribute to the FMN site.

The protein belongs to the dihydroorotate dehydrogenase family. Type 1 subfamily. As to quaternary structure, homodimer. FMN serves as cofactor.

The protein resides in the cytoplasm. The catalysed reaction is (S)-dihydroorotate + fumarate = orotate + succinate. It functions in the pathway pyrimidine metabolism; UMP biosynthesis via de novo pathway. Its function is as follows. Catalyzes the conversion of dihydroorotate to orotate with fumarate as the electron acceptor. The chain is Dihydroorotate dehydrogenase (fumarate) (URA1) from Saccharomyces bayanus (Yeast).